Consider the following 185-residue polypeptide: UPF0301 protein HCH_00550 (185 aa).

This sequence belongs to the UPF0301 (AlgH) family.

The polypeptide is UPF0301 protein HCH_00550 (Hahella chejuensis (strain KCTC 2396)).